The chain runs to 1434 residues: DNA-directed RNA polymerase subunit beta (1434 aa).

It belongs to the RNA polymerase beta chain family. In terms of assembly, the RNAP catalytic core consists of 2 alpha, 1 beta, 1 beta' and 1 omega subunit. When a sigma factor is associated with the core the holoenzyme is formed, which can initiate transcription.

The catalysed reaction is RNA(n) + a ribonucleoside 5'-triphosphate = RNA(n+1) + diphosphate. Its function is as follows. DNA-dependent RNA polymerase catalyzes the transcription of DNA into RNA using the four ribonucleoside triphosphates as substrates. In Ureaplasma urealyticum serovar 10 (strain ATCC 33699 / Western), this protein is DNA-directed RNA polymerase subunit beta.